The primary structure comprises 475 residues: WASH complex subunit 1 (475 aa).

Residues methionine 1–arginine 54 form a required for WASH complex assembly region. The WHD1 stretch occupies residues methionine 1 to isoleucine 167. Lysine 219 is covalently cross-linked (Glycyl lysine isopeptide (Lys-Gly) (interchain with G-Cter in ubiquitin)). Positions glutamate 296 to serine 475 are disordered. Residues alanine 302–proline 318 show a composition bias toward pro residues. Positions glutamine 357–serine 475 are VCA. The 23-residue stretch at glycine 369 to valine 391 folds into the WH2 domain. The span at serine 390–glutamine 406 shows a compositional bias: basic and acidic residues. Residues serine 432 to glycine 446 show a composition bias toward gly residues. Residues glycine 466 to serine 475 show a composition bias toward acidic residues.

Belongs to the WASH1 family. As to quaternary structure, component of the WASH core complex also described as WASH regulatory complex SHRC composed of WASHC1, WASHC2, WASHC3, WASHC4 and WASHC5. The WASH core complex associates with the F-actin-capping protein dimer (formed by CAPZA1, CAPZA2 or CAPZA3 and CAPZB) in a transient or substoichiometric manner which was initially described as WASH complex. Interacts (via WHD1 region) with WASHC2; the interaction is direct. Interacts with BECN1; WASHC1 and AMBRA1 can competitively interact with BECN1. Interacts with BLOC1S2; may associate with the BLOC-1 complex. Interacts with tubulin gamma chain (TUBG1 or TUBG2). Interacts with TBC1D23. In terms of processing, ubiquitinated at Lys-219 via 'Lys-63'-linked ubiquitin chains by the TRIM27:MAGEL2 E3 ubiquitin ligase complex, leading to promote endosomal F-actin assembly.

Its subcellular location is the early endosome membrane. The protein resides in the recycling endosome membrane. Functionally, acts as a component of the WASH core complex that functions as a nucleation-promoting factor (NPF) at the surface of endosomes, where it recruits and activates the Arp2/3 complex to induce actin polymerization, playing a key role in the fission of tubules that serve as transport intermediates during endosome sorting. Regulates the trafficking of endosomal alpha5beta1 integrin to the plasma membrane and involved in invasive cell migration. In T-cells involved in endosome-to-membrane recycling of receptors including T-cell receptor (TCR), CD28 and ITGAL; proposed to be implicated in T-cell proliferation and effector function. In dendritic cells involved in endosome-to-membrane recycling of major histocompatibility complex (MHC) class II probably involving retromer and subsequently allowing antigen sampling, loading and presentation during T-cell activation. Involved in cytokinesis and following polar body extrusion during oocyte meiotic maturation. Involved in Arp2/3 complex-dependent actin assembly driving Salmonella typhimurium invasion independent of ruffling. Involved in the exocytosis of MMP14 leading to matrix remodeling during invasive migration and implicating late endosome-to-plasma membrane tubular connections and cooperation with the exocyst complex. Involved in negative regulation of autophagy independently from its role in endosomal sorting by inhibiting BECN1 ubiquitination to inactivate PIK3C3/Vps34 activity. In Rattus norvegicus (Rat), this protein is WASH complex subunit 1.